The sequence spans 400 residues: Na(+)/H(+) antiporter NhaA (400 aa).

The next 12 helical transmembrane spans lie at 18–38, 68–88, 105–125, 133–153, 163–183, 186–206, 211–231, 232–252, 267–287, 305–325, 338–358, and 372–392; these read LATE…AIII, VHMW…GLEI, LPAL…LAVS, GGWA…LALL, VMLV…IAVF, SSIN…LLAF, VVAL…TLLS, GVHA…SAGS, GLAP…NAGV, IALG…LLAV, WLQI…SLFI, and AAKI…CVIL.

Belongs to the NhaA Na(+)/H(+) (TC 2.A.33) antiporter family.

The protein resides in the cell inner membrane. It catalyses the reaction Na(+)(in) + 2 H(+)(out) = Na(+)(out) + 2 H(+)(in). Na(+)/H(+) antiporter that extrudes sodium in exchange for external protons. The protein is Na(+)/H(+) antiporter NhaA of Pseudomonas entomophila (strain L48).